Consider the following 320-residue polypeptide: Cytochrome c biogenesis protein CcsA (320 aa).

A run of 8 helical transmembrane segments spans residues 9-29 (ILIH…FLTL), 44-64 (GMIV…IYSG), 71-91 (LYES…VCYF), 99-119 (LNAI…SGLL), 144-164 (MVLG…LLVI), 226-246 (IISL…VWAN), 261-281 (WAFI…NINL), and 287-307 (AIVA…VNLL).

It belongs to the CcmF/CycK/Ccl1/NrfE/CcsA family. May interact with Ccs1.

The protein localises to the plastid. It localises to the chloroplast thylakoid membrane. In terms of biological role, required during biogenesis of c-type cytochromes (cytochrome c6 and cytochrome f) at the step of heme attachment. The protein is Cytochrome c biogenesis protein CcsA of Carica papaya (Papaya).